Here is a 42-residue protein sequence, read N- to C-terminus: Photosystem II reaction center protein J (42 aa).

A helical transmembrane segment spans residues 10–30 (IPLWLVGTVVGLLAIGLLALF).

Belongs to the PsbJ family. PSII is composed of 1 copy each of membrane proteins PsbA, PsbB, PsbC, PsbD, PsbE, PsbF, PsbH, PsbI, PsbJ, PsbK, PsbL, PsbM, PsbT, PsbX, PsbY, PsbZ, Psb30/Ycf12, at least 3 peripheral proteins of the oxygen-evolving complex and a large number of cofactors. It forms dimeric complexes.

The protein resides in the plastid. It localises to the chloroplast thylakoid membrane. One of the components of the core complex of photosystem II (PSII). PSII is a light-driven water:plastoquinone oxidoreductase that uses light energy to abstract electrons from H(2)O, generating O(2) and a proton gradient subsequently used for ATP formation. It consists of a core antenna complex that captures photons, and an electron transfer chain that converts photonic excitation into a charge separation. In Mesostigma viride (Green alga), this protein is Photosystem II reaction center protein J.